We begin with the raw amino-acid sequence, 154 residues long: Ribonuclease H (154 aa).

The RNase H type-1 domain maps to 3 to 144 (ELPVVSIFTD…ADQLARDGVA (142 aa)). D12, E50, D72, and D136 together coordinate Mg(2+).

The protein belongs to the RNase H family. As to quaternary structure, monomer. Mg(2+) serves as cofactor.

The protein localises to the cytoplasm. It catalyses the reaction Endonucleolytic cleavage to 5'-phosphomonoester.. Its function is as follows. Endonuclease that specifically degrades the RNA of RNA-DNA hybrids. The protein is Ribonuclease H of Bradyrhizobium sp. (strain ORS 278).